A 337-amino-acid chain; its full sequence is 15-cis-phytoene synthase (337 aa).

This sequence belongs to the phytoene/squalene synthase family. ATP is required as a cofactor. Mn(2+) serves as cofactor. Requires Mg(2+) as cofactor.

It catalyses the reaction 2 (2E,6E,10E)-geranylgeranyl diphosphate = 15-cis-phytoene + 2 diphosphate. The protein operates within carotenoid biosynthesis; phytoene biosynthesis. Functionally, involved in the biosynthesis of carotenoids. Catalyzes the condensation of two molecules of geranylgeranyl diphosphate (GGPP) to give prephytoene diphosphate (PPPP) and the subsequent rearrangement of the cyclopropylcarbinyl intermediate to yield 15-cis-phytoene. The chain is 15-cis-phytoene synthase (crtB) from Synechocystis sp. (strain ATCC 27184 / PCC 6803 / Kazusa).